Here is a 371-residue protein sequence, read N- to C-terminus: Aminomethyltransferase (371 aa).

It belongs to the GcvT family. In terms of assembly, the glycine cleavage system is composed of four proteins: P, T, L and H.

The enzyme catalyses N(6)-[(R)-S(8)-aminomethyldihydrolipoyl]-L-lysyl-[protein] + (6S)-5,6,7,8-tetrahydrofolate = N(6)-[(R)-dihydrolipoyl]-L-lysyl-[protein] + (6R)-5,10-methylene-5,6,7,8-tetrahydrofolate + NH4(+). Its function is as follows. The glycine cleavage system catalyzes the degradation of glycine. This is Aminomethyltransferase from Cellvibrio japonicus (strain Ueda107) (Pseudomonas fluorescens subsp. cellulosa).